Here is a 38-residue protein sequence, read N- to C-terminus: MTGAYAASYLPWILIPIIGWLMPAVVMGLLFLYIESDA.

A helical membrane pass occupies residues 12–32 (WILIPIIGWLMPAVVMGLLFL).

The protein belongs to the PsaI family.

The protein localises to the cellular thylakoid membrane. Its function is as follows. May help in the organization of the PsaL subunit. This Gloeothece citriformis (strain PCC 7424) (Cyanothece sp. (strain PCC 7424)) protein is Photosystem I reaction center subunit VIII.